A 489-amino-acid chain; its full sequence is Betaine aldehyde dehydrogenase (489 aa).

2 residues coordinate K(+): Thr26 and Asp93. 150 to 152 (GAW) serves as a coordination point for NAD(+). Lys162 functions as the Charge relay system in the catalytic mechanism. 176 to 179 (KPSE) is an NAD(+) binding site. Residue Ile180 coordinates K(+). 229–232 (GVET) serves as a coordination point for NAD(+). K(+) is bound at residue Leu245. Glu251 serves as the catalytic Proton acceptor. Residues Gly253, Cys285, and Glu386 each coordinate NAD(+). Residue Cys285 is the Nucleophile of the active site. Cysteine sulfenic acid (-SOH) is present on Cys285. Residues Lys456 and Gly459 each contribute to the K(+) site. Glu463 functions as the Charge relay system in the catalytic mechanism.

Belongs to the aldehyde dehydrogenase family. As to quaternary structure, dimer of dimers. It depends on K(+) as a cofactor.

The enzyme catalyses betaine aldehyde + NAD(+) + H2O = glycine betaine + NADH + 2 H(+). The protein operates within amine and polyamine biosynthesis; betaine biosynthesis via choline pathway; betaine from betaine aldehyde: step 1/1. In terms of biological role, involved in the biosynthesis of the osmoprotectant glycine betaine. Catalyzes the irreversible oxidation of betaine aldehyde to the corresponding acid. The chain is Betaine aldehyde dehydrogenase from Paraburkholderia xenovorans (strain LB400).